Reading from the N-terminus, the 161-residue chain is Cyclic pyranopterin monophosphate synthase (161 aa).

Residues 75–77 (LCH) and 113–114 (ME) each bind substrate. D128 is a catalytic residue.

This sequence belongs to the MoaC family. Homohexamer; trimer of dimers.

It carries out the reaction (8S)-3',8-cyclo-7,8-dihydroguanosine 5'-triphosphate = cyclic pyranopterin phosphate + diphosphate. Its pathway is cofactor biosynthesis; molybdopterin biosynthesis. Its function is as follows. Catalyzes the conversion of (8S)-3',8-cyclo-7,8-dihydroguanosine 5'-triphosphate to cyclic pyranopterin monophosphate (cPMP). This Erwinia tasmaniensis (strain DSM 17950 / CFBP 7177 / CIP 109463 / NCPPB 4357 / Et1/99) protein is Cyclic pyranopterin monophosphate synthase.